The following is a 538-amino-acid chain: UPF0761 membrane protein PsycPRwf_0630 (538 aa).

6 consecutive transmembrane segments (helical) span residues 43–63 (LLSI…VPAL), 100–120 (LTAI…TTIE), 143–163 (WTII…SSAV), 183–203 (WVQV…YWFI), 215–235 (IAGV…GIIM), and 247–267 (AFAA…LILL). Positions 427-538 (SVFSAQDADA…IITEDDNPNK (112 aa)) are disordered. Low complexity predominate over residues 482–493 (PPDADIKAAAAK). The span at 503-514 (KHTETAKQEHKK) shows a compositional bias: basic and acidic residues.

Belongs to the UPF0761 family.

The protein resides in the cell inner membrane. This is UPF0761 membrane protein PsycPRwf_0630 from Psychrobacter sp. (strain PRwf-1).